We begin with the raw amino-acid sequence, 228 residues long: DNA-binding response regulator MtrA (228 aa).

One can recognise a Response regulatory domain in the interval 7 to 120; it reads RILVVDDDAS…ELVARVRARL (114 aa). The residue at position 56 (Asp-56) is a 4-aspartylphosphate. A DNA-binding region (ompR/PhoB-type) is located at residues 128 to 227; the sequence is AEMLSIADVE…VRGVGYKAGP (100 aa).

In terms of processing, phosphorylated by MtrB.

Its function is as follows. Member of the two-component regulatory system MtrA/MtrB. The sequence is that of DNA-binding response regulator MtrA (mtrA) from Mycobacterium bovis (strain ATCC BAA-935 / AF2122/97).